A 726-amino-acid polypeptide reads, in one-letter code: MAR-binding filament-like protein 1 (726 aa).

The transit peptide at 1–41 directs the protein to the chloroplast; sequence MGFLIGGSCFVPSVPLHSRFLSSPSSSSSSSPSSSQFGLLC. The N-terminal 54 residues, 42–95, are a transit peptide targeting the thylakoid; sequence SSNVAKFKRRRPTLASLNQEDGYEYDVASAKRRAFLLVGISVLPFLQLRSPALA. Residues 96–124 lie on the Lumenal, thylakoid side of the membrane; it reads DERGNEIKTSKVDLETEVAVVSEGTSPNP. Residues 125-145 traverse the membrane as a helical segment; that stretch reads FLALLNGLGIFSAGVLGALYA. Residues 144–691 adopt a coiled-coil conformation; it reads YALARQDTKA…KGEILRMRSQ (548 aa). Residues 146 to 726 lie on the Stromal side of the membrane; that stretch reads LARQDTKAAE…VRRRKSSTSS (581 aa). Residues 678-726 are disordered; that stretch reads LGSAKGEILRMRSQPDSVKAVNSTDNKEKSDNTVTVKKVVRRRKSSTSS. The segment covering 691-701 has biased composition (polar residues); it reads QPDSVKAVNST. The Nuclear localization signal motif lies at 715-722; sequence KVVRRRKS. Over residues 715 to 726 the composition is skewed to basic residues; the sequence is KVVRRRKSSTSS.

Interacts with PTST2; the interaction is essential for the initiation of starch granules biosynthesis in leaf chloroplasts, for the correct location of the process in the stromal spaces between the thylakoid membranes, and for the association of PTST2 with the thylakoid membranes. Predicted to be translocated into the thylakoid by the Tat system. The position of the transit peptide cleavages have not been experimentally proven.

It localises to the plastid. Its subcellular location is the chloroplast. It is found in the chloroplast thylakoid membrane. The protein localises to the chloroplast stroma. The protein resides in the chloroplast nucleoid. It localises to the nucleus. Its subcellular location is the nucleus matrix. DNA-binding protein required for the initiation of starch granules biosynthesis in leaf chloroplasts. Anchored to the thylakoid membranes with its C-terminus facing into the stroma where it is essential for localizing PTST2 and SS4 to the stromal spaces between the thylakoid membranes in order to begin starch granule formation. Associated with leaf chloroplastic nucleoids in vivo. Binds to various chloroplastic double-stranded DNA fragments without particular sequence specificity in vitro. May function at the interface between nucleoids and thylakoids possibly by anchoring nucleoids to the thylakoid membrane system in mature chloroplasts. Likely to participate in nuclear architecture by connecting chromatin with the nuclear matrix and potentially with the nuclear envelope. In Arabidopsis thaliana (Mouse-ear cress), this protein is MAR-binding filament-like protein 1.